We begin with the raw amino-acid sequence, 86 residues long: Small ribosomal subunit protein bS20 (86 aa).

The segment at 1–25 is disordered; the sequence is MTNIKSQQKRNRTNERARLRNKSVK.

Belongs to the bacterial ribosomal protein bS20 family.

In terms of biological role, binds directly to 16S ribosomal RNA. The sequence is that of Small ribosomal subunit protein bS20 from Mycobacterium leprae (strain Br4923).